Consider the following 439-residue polypeptide: tRNA modification GTPase MnmE (439 aa).

Arginine 20, glutamate 78, and lysine 116 together coordinate (6S)-5-formyl-5,6,7,8-tetrahydrofolate. The TrmE-type G domain occupies glycine 211–glutamate 364. Residues asparagine 221–threonine 226, serine 240–threonine 246, and aspartate 265–glycine 268 contribute to the GTP site. Residues serine 225 and threonine 246 each contribute to the Mg(2+) site. Lysine 439 provides a ligand contact to (6S)-5-formyl-5,6,7,8-tetrahydrofolate.

The protein belongs to the TRAFAC class TrmE-Era-EngA-EngB-Septin-like GTPase superfamily. TrmE GTPase family. In terms of assembly, homodimer. Heterotetramer of two MnmE and two MnmG subunits. It depends on K(+) as a cofactor.

Its subcellular location is the cytoplasm. Functionally, exhibits a very high intrinsic GTPase hydrolysis rate. Involved in the addition of a carboxymethylaminomethyl (cmnm) group at the wobble position (U34) of certain tRNAs, forming tRNA-cmnm(5)s(2)U34. The polypeptide is tRNA modification GTPase MnmE (Ehrlichia chaffeensis (strain ATCC CRL-10679 / Arkansas)).